The primary structure comprises 398 residues: MHKLTLDDVDVRGQRVLIRVDFNVPLDTSEDGSPCVGDDTRIRAALPTIRHVLDHGGKAILVSHLGRPGGQPDPDLSLACVADHLGTLIEERVRFSSNTVGDTVEEVINGMSEGSVILLENTRFDAGEKANDEAFATALANLADVYVNDAFGAAHRAHASTAGVAEFMDVAALGRLMEDEIEALTRVRDDPAHPMVAILGGSKVSDKLGTIRALSETADHLLIGGAMSYTFLKVLGHEVGASRVEADRLDTAEDLYEQAEGTITLPTDHVVAEAPEADATASVVEGDIPAELMGLDIGPATIDAYRDRILGAATVVWNGPMGVFEVDPFADGTTAIAEAMADATDDGAFSVVGGGDSVSALTRSGCDDRISHVSTGGGALLTFLEGAPLPGVEALTDA.

Residues 21 to 23 (DFN), Arg-41, 64 to 67 (HLGR), Arg-123, and Arg-156 each bind substrate. ATP contacts are provided by residues Lys-207, Gly-294, Glu-325, and 354-357 (GGDS).

This sequence belongs to the phosphoglycerate kinase family. As to quaternary structure, monomer.

Its subcellular location is the cytoplasm. The catalysed reaction is (2R)-3-phosphoglycerate + ATP = (2R)-3-phospho-glyceroyl phosphate + ADP. The protein operates within carbohydrate degradation; glycolysis; pyruvate from D-glyceraldehyde 3-phosphate: step 2/5. In Salinibacter ruber (strain DSM 13855 / M31), this protein is Phosphoglycerate kinase.